Reading from the N-terminus, the 1134-residue chain is Protocadherin-18 (1134 aa).

Positions 1–27 (MYQMNAKMHFTFVFALLVVSFNLDVLG) are cleaved as a signal peptide. 6 consecutive Cadherin domains span residues 28 to 137 (KNLK…SPQF), 138 to 246 (SRSL…SPAF), 247 to 354 (EQQS…KPEI), 361 to 465 (PGKE…PPHF), 466 to 576 (QRSR…VPVV), and 582 to 697 (RNNT…APLD). The Extracellular portion of the chain corresponds to 28–699 (KNLKYRIYEE…SVSQAPLDVS (672 aa)). N103 is a glycosylation site (N-linked (GlcNAc...) asparagine). N269 carries N-linked (GlcNAc...) asparagine glycosylation. N559 carries N-linked (GlcNAc...) asparagine glycosylation. The helical transmembrane segment at 700–720 (MIIIISLGAICAVLLVIMVLF) threads the bilayer. Over 721–1134 (ATRCNREKKD…NKLLQDVRQS (414 aa)) the chain is Cytoplasmic. 3 disordered regions span residues 768–800 (TLPIRSHHRSSPSSSPTLERGQMGSRQSHNSHQ), 868–888 (SLKDSGRGDSEAGDSDYDLGR), and 941–1003 (DYRS…TSSL). Polar residues predominate over residues 791–800 (GSRQSHNSHQ). The segment covering 868-877 (SLKDSGRGDS) has biased composition (basic and acidic residues). Residues 892-1134 (IDRLLGEGFS…NKLLQDVRQS (243 aa)) are interaction with DAB1.

Interacts with DAB1.

Its subcellular location is the cell membrane. Its function is as follows. Potential calcium-dependent cell-adhesion protein. This chain is Protocadherin-18 (PCDH18), found in Bos taurus (Bovine).